The primary structure comprises 188 residues: Succinate-acetate/proton symporter SatP (188 aa).

The Cytoplasmic portion of the chain corresponds to 1–13 (MGNTKLANPAPLG). The helical transmembrane segment at 14–34 (LMGFGMTTILLNLHNVGYFAL) threads the bilayer. Asp-35 is a topological domain (periplasmic). A helical membrane pass occupies residues 36–56 (GIILAMGIFYGGIAQIFAGLL). Residues 57–63 (EYKKGNT) are Cytoplasmic-facing. The chain crosses the membrane as a helical span at residues 64-84 (FGLTAFTSYGSFWLTLVAILL). The Periplasmic segment spans residues 85–97 (MPKLGLTDAPNAQ). A helical membrane pass occupies residues 98–118 (FLGVYLGLWGVFTLFMFFGTL). At 119-122 (KGAR) the chain is on the cytoplasmic side. The chain crosses the membrane as a helical span at residues 123 to 143 (VLQFVFFSLTVLFALLAIGNI). Over 144–148 (AGNAA) the chain is Periplasmic. Residues 149–169 (IIHFAGWIGLICGASAIYLAM) traverse the membrane as a helical segment. Residues 170–188 (GEVLNEQFGRTVLPIGESH) lie on the Cytoplasmic side of the membrane.

It belongs to the acetate uptake transporter (AceTr) (TC 2.A.96) family.

It is found in the cell inner membrane. Its function is as follows. Uptake of acetate and succinate. Transport is energetically dependent on the protonmotive force. This is Succinate-acetate/proton symporter SatP (satP) from Escherichia coli O157:H7.